Reading from the N-terminus, the 555-residue chain is Formate--tetrahydrofolate ligase (555 aa).

65–72 (TPAGEGKS) is a binding site for ATP.

This sequence belongs to the formate--tetrahydrofolate ligase family.

The catalysed reaction is (6S)-5,6,7,8-tetrahydrofolate + formate + ATP = (6R)-10-formyltetrahydrofolate + ADP + phosphate. Its pathway is one-carbon metabolism; tetrahydrofolate interconversion. This is Formate--tetrahydrofolate ligase from Staphylococcus aureus (strain COL).